The following is a 64-amino-acid chain: Conotoxin Tx3.5-a (64 aa).

The first 19 residues, 1 to 19, serve as a signal peptide directing secretion; that stretch reads MSKLGVLLTICLLLFPLTA. Positions 20–47 are excised as a propeptide; that stretch reads LPLDGDQPADQAAERMQAEQHPLFDQKR. 3 disulfide bridges follow: Cys49-Cys58, Cys50-Cys62, and Cys54-Cys63. Cys63 is subject to Cysteine amide.

Belongs to the conotoxin M superfamily. Post-translationally, contains 3 disulfide bonds. In terms of processing, two peptides are produced from this precursor. Conotoxin Tx3.5-b is amidated at Cys-63, conotoxin Tx3.5-a has an unmodified C-terminus. Expressed by the venom duct. Is present in all duct parts with a highest content in part 2 (proximal of the venom bulb) and then decreases in concentration toward the end of the duct.

Its subcellular location is the secreted. The sequence is that of Conotoxin Tx3.5-a from Conus textile (Cloth-of-gold cone).